The following is an 875-amino-acid chain: Pyrogallol hydroxytransferase large subunit (875 aa).

The segment at R82 to D104 is disordered. Residue S175 participates in Mo-bis(molybdopterin guanine dinucleotide) binding.

It belongs to the prokaryotic molybdopterin-containing oxidoreductase family. As to quaternary structure, heterodimer of a large and a small subunit. It depends on Mo-bis(molybdopterin guanine dinucleotide) as a cofactor.

It catalyses the reaction 1,2,3,5-tetrahydroxybenzene + 1,2,3-trihydroxybenzene = 1,2,3,5-tetrahydroxybenzene + 1,3,5-trihydroxybenzene. Functionally, isomerization of pyrogallol to phloroglucin. This Pelobacter acidigallici protein is Pyrogallol hydroxytransferase large subunit (athL).